The following is a 143-amino-acid chain: Transcriptional regulator MraZ (143 aa).

SpoVT-AbrB domains are found at residues 5–47 (EFRH…PMNE) and 76–119 (ASEC…SQEK).

It belongs to the MraZ family. As to quaternary structure, forms oligomers.

Its subcellular location is the cytoplasm. It localises to the nucleoid. This Natranaerobius thermophilus (strain ATCC BAA-1301 / DSM 18059 / JW/NM-WN-LF) protein is Transcriptional regulator MraZ.